A 207-amino-acid chain; its full sequence is Outer-membrane lipoprotein LolB (207 aa).

Residues 1 to 21 form the signal peptide; it reads MPLPDFRLIRLLPLAALVLTA. Cysteine 22 carries N-palmitoyl cysteine lipidation. A lipid anchor (S-diacylglycerol cysteine) is attached at cysteine 22.

This sequence belongs to the LolB family. As to quaternary structure, monomer.

The protein resides in the cell outer membrane. Functionally, plays a critical role in the incorporation of lipoproteins in the outer membrane after they are released by the LolA protein. This Escherichia coli O127:H6 (strain E2348/69 / EPEC) protein is Outer-membrane lipoprotein LolB.